An 87-amino-acid polypeptide reads, in one-letter code: UPF0473 protein PTH_1066 (87 aa).

This sequence belongs to the UPF0473 family.

The sequence is that of UPF0473 protein PTH_1066 from Pelotomaculum thermopropionicum (strain DSM 13744 / JCM 10971 / SI).